Reading from the N-terminus, the 286-residue chain is Bifunctional protein FolD 2 (286 aa).

NADP(+)-binding positions include 165–167, threonine 192, and valine 233; that span reads GRG.

It belongs to the tetrahydrofolate dehydrogenase/cyclohydrolase family. Homodimer.

It carries out the reaction (6R)-5,10-methylene-5,6,7,8-tetrahydrofolate + NADP(+) = (6R)-5,10-methenyltetrahydrofolate + NADPH. The catalysed reaction is (6R)-5,10-methenyltetrahydrofolate + H2O = (6R)-10-formyltetrahydrofolate + H(+). Its pathway is one-carbon metabolism; tetrahydrofolate interconversion. Its function is as follows. Catalyzes the oxidation of 5,10-methylenetetrahydrofolate to 5,10-methenyltetrahydrofolate and then the hydrolysis of 5,10-methenyltetrahydrofolate to 10-formyltetrahydrofolate. The sequence is that of Bifunctional protein FolD 2 from Rhodococcus jostii (strain RHA1).